The chain runs to 1942 residues: Myosin-1 (1942 aa).

Positions 33-82 (DAKSSVFVVDAKESFVKATVQSREGGKVTAKTEGGTTVTVKDDQVYPMNP) constitute a Myosin N-terminal SH3-like domain. A Phosphoserine modification is found at S36. T64 and T69 each carry phosphothreonine. The region spanning 86–785 (DKIEDMAMMT…LLGLLEEMRD (700 aa)) is the Myosin motor domain. Residue K130 is modified to N6,N6,N6-trimethyllysine. 179–186 (GESGAGKT) serves as a coordination point for ATP. Y389 carries the phosphotyrosine modification. Residue T419 is modified to Phosphothreonine. Y424 carries the post-translational modification Phosphotyrosine. Phosphoserine is present on S625. The interval 662–684 (LNKLMTNLRSTHPHFVRCIIPNE) is actin-binding. The residue at position 760 (H760) is a Pros-methylhistidine. The tract at residues 764–778 (KFGHTKVFFKAGLLG) is actin-binding. An IQ domain is found at 788-817 (LAQLITRTQAMCRGYLARVEYQKMVERRES). A coiled-coil region spans residues 846 to 1942 (LLKSAETEKE…EVHTKIISEE (1097 aa)). A phosphoserine mark is found at S1095, S1099, S1165, S1240, and S1246. The segment at 1156–1175 (RLEEAGGATSAQIEMNKKRE) is disordered. A Phosphothreonine modification is found at T1258. The residue at position 1264 (S1264) is a Phosphoserine. Phosphothreonine occurs at positions 1268 and 1289. 4 positions are modified to phosphoserine: S1291, S1295, S1306, and S1309. A Phosphotyrosine modification is found at Y1467. A Phosphothreonine modification is found at T1470. S1477 is subject to Phosphoserine. Residue Y1495 is modified to Phosphotyrosine. Position 1498 is a phosphoserine (S1498). T1504 is subject to Phosphothreonine. Phosphoserine is present on S1517. Position 1520 is a phosphothreonine (T1520). Phosphoserine is present on residues S1545, S1557, S1577, S1603, S1606, S1717, and S1729. Phosphothreonine occurs at positions 1733 and 1739. A Phosphoserine modification is found at S1742.

It belongs to the TRAFAC class myosin-kinesin ATPase superfamily. Myosin family. Muscle myosin is a hexameric protein that consists of 2 heavy chain subunits (MHC), 2 alkali light chain subunits (MLC) and 2 regulatory light chain subunits (MLC-2). Interacts with SLC26A5. Expressed in the cochlea (at protein level). Strongly expressed in spiral ganglion neurons with axonal sprouts and supporting cells around hair cells. In the organ of Corti, it is expressed in inner and outer hair cells, and in supporting cells.

The protein resides in the cytoplasm. It is found in the myofibril. Its function is as follows. Required for normal hearing. It plays a role in cochlear amplification of auditory stimuli, likely through the positive regulation of prestin (SLC26A5) activity and outer hair cell (OHC) electromotility. This chain is Myosin-1, found in Mus musculus (Mouse).